The sequence spans 705 residues: Protein artemis (705 aa).

A Phosphothreonine modification is found at Thr-380. Ser-385 carries the phosphoserine modification. Residues 451–462 (EESNSDSGEELE) show a composition bias toward acidic residues. Disordered stretches follow at residues 451-484 (EESNSDSGEELETPPPSLQGGLGPSTLVQQNADP), 535-569 (PKLCSDSDGDSTHISSQNSSQSTHITDQGSQGWDS), and 638-675 (TLSGRKSPPEKTLLSSTRADSQSSSDFEIPSTPEAELP). The segment covering 546–559 (THISSQNSSQSTHI) has biased composition (low complexity). The segment covering 560 to 569 (TDQGSQGWDS) has biased composition (polar residues). Positions 652 to 662 (SSTRADSQSSS) are enriched in low complexity. A Phosphoserine; by ATM modification is found at Ser-658.

This sequence belongs to the DNA repair metallo-beta-lactamase (DRMBL) family. Interacts with LIG4; the interaction is direct. Interacts with ATM. Interacts with BRCA1. Interacts with PRKDC. Interacts with TP53BP1. Also exhibits ATM- and phosphorylation-dependent interaction with the MRN complex, composed of MRE11, RAD50, and NBN. In terms of processing, phosphorylation on undefined residues by PRKDC may stimulate endonucleolytic activity on 5' and 3' hairpins and overhangs. PRKDC must remain present, even after phosphorylation, for efficient hairpin opening. Also phosphorylated by ATM in response to ionizing radiation (IR) and by ATR in response to ultraviolet (UV) radiation.

It is found in the nucleus. Required for V(D)J recombination, the process by which exons encoding the antigen-binding domains of immunoglobulins and T-cell receptor proteins are assembled from individual V, (D), and J gene segments. V(D)J recombination is initiated by the lymphoid specific RAG endonuclease complex, which generates site specific DNA double strand breaks (DSBs). These DSBs present two types of DNA end structures: hairpin sealed coding ends and phosphorylated blunt signal ends. These ends are independently repaired by the non homologous end joining (NHEJ) pathway to form coding and signal joints respectively. This protein likely exhibits single-strand specific 5'-3' exonuclease activity in isolation, and may acquire endonucleolytic activity on 5' and 3' hairpins and overhangs when in a complex with PRKDC. The latter activity may be required specifically for the resolution of closed hairpins prior to the formation of the coding joint. May also be required for the repair of complex DSBs induced by ionizing radiation, which require substantial end-processing prior to religation by NHEJ. The polypeptide is Protein artemis (Dclre1c) (Mus musculus (Mouse)).